The following is a 335-amino-acid chain: Trans-1,2-dihydrobenzene-1,2-diol dehydrogenase (335 aa).

Belongs to the Gfo/Idh/MocA family. Homodimer.

The enzyme catalyses (1R,2R)-1,2-dihydrobenzene-1,2-diol + NADP(+) = catechol + NADPH + H(+). It carries out the reaction D-xylose + NADP(+) = D-xylono-1,5-lactone + NADPH + H(+). This Bos taurus (Bovine) protein is Trans-1,2-dihydrobenzene-1,2-diol dehydrogenase (DHDH).